Consider the following 100-residue polypeptide: uncharacterized protein (100 aa).

A helical transmembrane segment spans residues 68 to 88; sequence VFLFFFTGSSPSFPAALLGLF.

It localises to the membrane. This is an uncharacterized protein from Saccharomyces cerevisiae (strain ATCC 204508 / S288c) (Baker's yeast).